The chain runs to 325 residues: UDP-N-acetylenolpyruvoylglucosamine reductase (325 aa).

Residues 40-221 enclose the FAD-binding PCMH-type domain; that stretch reads RTGGLAELFY…RAAMDEVALH (182 aa). Arg186 is a catalytic residue. The active-site Proton donor is Ser235. The active site involves Glu305.

This sequence belongs to the MurB family. The cofactor is FAD.

Its subcellular location is the cytoplasm. It carries out the reaction UDP-N-acetyl-alpha-D-muramate + NADP(+) = UDP-N-acetyl-3-O-(1-carboxyvinyl)-alpha-D-glucosamine + NADPH + H(+). Its pathway is cell wall biogenesis; peptidoglycan biosynthesis. Functionally, cell wall formation. The sequence is that of UDP-N-acetylenolpyruvoylglucosamine reductase from Bartonella henselae (strain ATCC 49882 / DSM 28221 / CCUG 30454 / Houston 1) (Rochalimaea henselae).